The chain runs to 73 residues: U-scoloptoxin(15)-Sm2a (73 aa).

The signal sequence occupies residues 1-20 (MKFYIVFCLFVVLLINFAAA). 2 cysteine pairs are disulfide-bonded: C39–C66 and C43–C68.

Belongs to the scoloptoxin-15 family. As to expression, expressed by the venom gland.

The protein localises to the secreted. Functionally, activity unknown, even that a lot of targets (Kv, Nav, Cav) have been tested and activities on insects and mice have been tested. This is U-scoloptoxin(15)-Sm2a from Scolopendra morsitans (Tanzanian blue ringleg centipede).